Here is a 603-residue protein sequence, read N- to C-terminus: uncharacterized protein (603 aa).

A PE domain is found at 1 to 93 (MSFVIAAPET…AGAYASAEAA (93 aa)). Residues 309-333 (GIFTGNGGTGGTGGTGTGNQLVGGE) are disordered.

Belongs to the mycobacterial PE family. PGRS subfamily.

This is an uncharacterized protein from Mycobacterium tuberculosis (strain CDC 1551 / Oshkosh).